A 141-amino-acid chain; its full sequence is Early nodulin-like protein 19 (141 aa).

The first 26 residues, Met-1–Ala-26, serve as a signal peptide directing secretion. A Phytocyanin domain is found at Lys-27 to Thr-127. Asn-42 and Asn-88 each carry an N-linked (GlcNAc...) asparagine glycan. Cys-80 and Cys-115 are oxidised to a cystine.

The protein belongs to the early nodulin-like (ENODL) family.

Its function is as follows. May act as a carbohydrate transporter. This chain is Early nodulin-like protein 19, found in Arabidopsis thaliana (Mouse-ear cress).